A 129-amino-acid chain; its full sequence is MLWNNKTSAKNTSSTDKGQVTESYAQQYLSKQGLRFIERNFHSRQGEIDLIMLDGDTYVFVEVKYRKSKGFGGAIAAISASKQNKVKHCITFYLHQNGLNEYNTPCRVDVVALEGDITQPQVTWLKNAF.

Belongs to the UPF0102 family.

The sequence is that of UPF0102 protein CPS_4433 from Colwellia psychrerythraea (strain 34H / ATCC BAA-681) (Vibrio psychroerythus).